We begin with the raw amino-acid sequence, 800 residues long: Nuclear cap-binding protein subunit 1 (800 aa).

The tract at residues 1–26 (MSRRRAHDTEDEGYDHRRNKRRRVSE) is disordered. Thr9 carries the phosphothreonine modification. Positions 31 to 243 (EDRLESLILR…CLWAQIRKLR (213 aa)) constitute an MIF4G domain. The tract at residues 669–699 (LSKADSSSSDSDEDTPHKRKKPITHADKPSE) is disordered.

The protein belongs to the NCBP1 family. As to quaternary structure, component of the nuclear cap-binding complex (CBC), a heterodimer composed of Cbp80 and Cbp20 that interacts with m7GpppG-capped RNA.

The protein localises to the nucleus. Its function is as follows. Component of the cap-binding complex (CBC), which binds cotranscriptionally to the 5'-cap of pre-mRNAs and is involved in various processes such as pre-mRNA splicing and RNA-mediated gene silencing (RNAi). The CBC complex is involved in miRNA-mediated RNA interference via its interaction with Ars2 and is required for primary microRNAs (miRNAs) processing. Also involved in innate immunity via the short interfering RNAs (siRNAs) processing machinery by restricting the viral RNA production. In the CBC complex, Cbp80 does not bind directly capped RNAs (m7GpppG-capped RNA) but is required to stabilize the movement of the N-terminal loop of Cbp20 and lock the CBC into a high affinity cap-binding state with the cap structure. This Drosophila willistoni (Fruit fly) protein is Nuclear cap-binding protein subunit 1 (Cbp80).